The following is a 228-amino-acid chain: Endonuclease V (228 aa).

Mg(2+)-binding residues include D43 and D109.

Belongs to the endonuclease V family. Mg(2+) serves as cofactor.

It localises to the cytoplasm. It catalyses the reaction Endonucleolytic cleavage at apurinic or apyrimidinic sites to products with a 5'-phosphate.. In terms of biological role, DNA repair enzyme involved in the repair of deaminated bases. Selectively cleaves double-stranded DNA at the second phosphodiester bond 3' to a deoxyinosine leaving behind the intact lesion on the nicked DNA. In Dictyoglomus turgidum (strain DSM 6724 / Z-1310), this protein is Endonuclease V.